Here is a 245-residue protein sequence, read N- to C-terminus: MDKNELVQKAKLAEQAERYDDMAACMKRVTEEGGELSNEERNLLSVAYKNVVGARRSSWRVVSSIEQKTEGAEKKQEMSREYREKIEAELREICNDVLNLLDKFLIANASQPESKVFYLKMKGDYYRYLAEVASGDAKADIVAQSQKAYQDAFDISKTEMQPTHPIRLGLALNFSVFYYEILNCPEKACSLAKAAFDEAIAELDTLSEESYKDSTLIMQLLRDNLTLWTSDTQGDEAEQGEGGEN.

The protein belongs to the 14-3-3 family. In terms of assembly, homodimer.

It is found in the cytoplasm. Its function is as follows. Adapter protein implicated in the regulation of a large spectrum of both general and specialized signaling pathways. Binds to a large number of partners, usually by recognition of a phosphoserine or phosphothreonine motif. Binding generally results in the modulation of the activity of the binding partner. This is 14-3-3 protein zeta (ywhaz) from Xenopus tropicalis (Western clawed frog).